The primary structure comprises 440 residues: Transposon Ty1-ER2 Gag polyprotein (440 aa).

Polar residues-rich tracts occupy residues M1–P10, T48–S60, and Q127–F152. 3 disordered regions span residues M1–Q93, P126–P173, and G352–Y440. The span at T153–T165 shows a compositional bias: low complexity. The segment at N299 to H401 is RNA-binding. The span at N402–S418 shows a compositional bias: low complexity. S416 bears the Phosphoserine mark. A compositionally biased stretch (polar residues) spans K419 to N428. Residues N429–Y440 show a composition bias toward basic and acidic residues.

As to quaternary structure, homotrimer.

The protein localises to the cytoplasm. Capsid protein (CA) is the structural component of the virus-like particle (VLP), forming the shell that encapsulates the retrotransposons dimeric RNA genome. The particles are assembled from trimer-clustered units and there are holes in the capsid shells that allow for the diffusion of macromolecules. CA also has nucleocapsid-like chaperone activity, promoting primer tRNA(i)-Met annealing to the multipartite primer-binding site (PBS), dimerization of Ty1 RNA and initiation of reverse transcription. This Saccharomyces cerevisiae (strain ATCC 204508 / S288c) (Baker's yeast) protein is Transposon Ty1-ER2 Gag polyprotein (TY1A-ER2).